The sequence spans 652 residues: NADH-ubiquinone oxidoreductase chain 5 (652 aa).

16 helical membrane passes run 1–21 (MYLS…FLGR), 30–50 (LITC…FIEV), 72–92 (IIWG…VLII), 119–139 (LFTF…MFVG), 140–160 (WEGV…RIAA), 177–197 (FLTI…YSTV), 200–220 (LAPY…LIGA), 241–261 (TPVS…YLLM), 274–294 (LLLC…IGLF), 301–319 (VIAY…AIGL), 331–351 (NHAF…HAVA), 365–385 (FLPL…AFPF), 403–423 (FSFS…FTTL), 454–474 (LFLT…GFIT), 505–525 (FAVP…FSII), and 619–639 (LYIL…FNFL).

Belongs to the complex I subunit 5 family.

The protein resides in the mitochondrion inner membrane. The enzyme catalyses a ubiquinone + NADH + 5 H(+)(in) = a ubiquinol + NAD(+) + 4 H(+)(out). Core subunit of the mitochondrial membrane respiratory chain NADH dehydrogenase (Complex I) that is believed to belong to the minimal assembly required for catalysis. Complex I functions in the transfer of electrons from NADH to the respiratory chain. The immediate electron acceptor for the enzyme is believed to be ubiquinone. The sequence is that of NADH-ubiquinone oxidoreductase chain 5 (ND5) from Podospora anserina (strain S / ATCC MYA-4624 / DSM 980 / FGSC 10383) (Pleurage anserina).